A 163-amino-acid chain; its full sequence is Intron-encoded endonuclease I-PpoI (163 aa).

Homodimer. The cofactor is Zn(2+).

Its function is as follows. Mediates the homing of a group I intron in the ribosomal DNA. Makes a four-base staggered cut in its ribosomal DNA target sequence. The protein is Intron-encoded endonuclease I-PpoI of Physarum polycephalum (Slime mold).